The primary structure comprises 828 residues: Vacuolar transporter chaperone complex subunit 2 (828 aa).

The SPX domain maps to 1–146; it reads MLFGVKLANE…PKYPSVKSLL (146 aa). Residues 1–693 lie on the Cytoplasmic side of the membrane; the sequence is MLFGVKLANE…EAKVWLANER (693 aa). Residues 127–134 are important for inositol polyphosphate binding; sequence KIVKKHDK. Phosphoserine is present on residues Ser182, Ser187, Ser196, Ser264, Ser583, Ser615, and Ser616. Residues 580-636 are disordered; it reads RRLSNLKEPQHQAAVPVSQEENERITSQGDLEADGSSDEETEQEPHSKRSKKVRRRK. Residues 610 to 621 are compositionally biased toward acidic residues; sequence LEADGSSDEETE. Thr620 carries the phosphothreonine modification. Position 626 is a phosphoserine (Ser626). Residues 627-636 are compositionally biased toward basic residues; sequence KRSKKVRRRK. Phosphoserine is present on Ser657. Residues 694 to 716 form a helical membrane-spanning segment; the sequence is TFNRWLSVTSLLSVLTFSIYNSV. At 717 to 727 the chain is on the vacuolar side; sequence KKAEYPTLANY. Residues 728 to 748 form a helical membrane-spanning segment; it reads MAYVYFGLTIFCALWSYSIYM. The Cytoplasmic segment spans residues 749 to 766; that stretch reads KRVDIIQQRSGQHLDAPL. The chain crosses the membrane as a helical span at residues 767 to 787; it reads GPVLVSIVLFVTLVVNFVMAF. The Vacuolar segment spans residues 788–828; it reads RNAAKSRQELQIQNLEVPERIPEVLRPLQNYLFKLMGPSSD.

This sequence belongs to the VTC2/3 family. In terms of assembly, the VTC core complex is an integral membrane heterooligomer composed of the catalytic subunit VTC4 and the accessory subunits VTC1, VTC2 and VTC3. The complex exists in 2 different sub-complexes: VTC1-VTC2-VCT4 and VCT1-VTC3-VTC4. The VCT1-VTC3-VTC4 subcomplex is mostly found on the vacuolar membrane. The VTC1-VTC2-VCT4 subcomplex is observed in the cell periphery, probably ER and nuclear envelope, but localizes to the vacuole under phosphate starvation. Each subunit contains 3 transmembrane helices. VTC1 is a small membrane protein without hydrophilic domain. VTC2, VTC3 and VTC4 are related and have 2 hydrophilic domains that face the cytosol, an N-terminal SPX domain and the central core domain. The central core in VTC4 is the catalytic domain, with the essential catalytic lysine replaced by isoleucine and leucine in VTC2 and VTC3, respectively. The core complex associates with the accessory subunit VTC5. The complex interacts with the v-SNARE NYV1 and with the V(0) subunit of V-ATPase VPH1.

It localises to the vacuole membrane. The protein resides in the cytoplasm. Its subcellular location is the cell cortex. It is found in the endoplasmic reticulum membrane. The protein localises to the cytoplasmic vesicle. It localises to the autophagosome membrane. Functionally, accessory subunit of the vacuolar transporter chaperone (VTC) complex. The VTC complex acts as a vacuolar polyphosphate polymerase that catalyzes the synthesis of inorganic polyphosphate (polyP) via transfer of phosphate from ATP to a growing polyP chain, releasing ADP. VTC exposes its catalytic domain VTC4 to the cytosol, where the growing polyP chain winds through a tunnel-shaped pocket, integrating cytoplasmic polymer synthesis with polyP membrane translocation. The VTC complex carries 9 vacuolar transmembrane domains, which are likely to constitute the translocation channel into the organelle lumen. PolyP synthesis is tightly coupled to its transport into the vacuole lumen, in order to avoid otherwise toxic intermediates in the cytosol, and it depends on the proton gradient across the membrane, formed by V-ATPase. Binds inositol hexakisphosphate (Ins6P) and similar inositol polyphosphates, such as 5-diphospho-inositol pentakisphosphate (5-InsP7); these are important intracellular signaling molecules. Inositol polyphosphate binding promotes vacuolar polyphosphate synthesis. The VTC complex also plays a role in vacuolar membrane fusion. Required for SEC18/NSF activity in SNARE priming, membrane binding of LMA1 and V(0) trans-complex formation. In Saccharomyces cerevisiae (strain ATCC 204508 / S288c) (Baker's yeast), this protein is Vacuolar transporter chaperone complex subunit 2.